We begin with the raw amino-acid sequence, 180 residues long: Large ribosomal subunit protein uL5c (180 aa).

The protein belongs to the universal ribosomal protein uL5 family. As to quaternary structure, part of the 50S ribosomal subunit; contacts the 5S rRNA.

The protein localises to the plastid. It is found in the chloroplast. Its function is as follows. Binds 5S rRNA, forms part of the central protuberance of the 50S subunit. The chain is Large ribosomal subunit protein uL5c (rpl5) from Oltmannsiellopsis viridis (Marine flagellate).